An 826-amino-acid chain; its full sequence is Homeobox-leucine zipper protein HDG5 (826 aa).

2 disordered regions span residues 1-34 (MLTMGEGNVMTSNNRFASPPQQPSSSSPGTIQNP) and 69-119 (EMME…HRHT). Low complexity predominate over residues 23–34 (PSSSSPGTIQNP). Residues 88–105 (EDPKFGNESDVNELHDDE) show a composition bias toward basic and acidic residues. Residues 110–119 (AKKKRYHRHT) show a composition bias toward basic residues. A DNA-binding region (homeobox) is located at residues 111–170 (KKKRYHRHTNRQIQEMEALFKENPHPDDKQRKRLSAELGLKPRQVKFWFQNRRTQMKAQQ). Positions 165–189 (QMKAQQDRNENVMLRAENDNLKSEN) form a coiled coil. In terms of domain architecture, START spans 314-558 (ADEEKVIAME…LQRQCERIAS (245 aa)).

The protein belongs to the HD-ZIP homeobox family. Class IV subfamily. In terms of tissue distribution, expressed in shoot apical meristem (SAM) with higher levels in L1 cells and the epidermal layer of young leaves. Expressed in the L1 of apical inflorescence meristems, early flower primordia, carpel and stamen filament epidermis, ovule primordia, nucellus and chalaze.

The protein localises to the nucleus. Its function is as follows. Probable transcription factor. Involved, together with PDF2, in the regulation of flower organs development by promoting the expression of APETALA 3 (AP3) in the epidermis and internal cell layers of developing flowers. The polypeptide is Homeobox-leucine zipper protein HDG5 (Arabidopsis thaliana (Mouse-ear cress)).